A 297-amino-acid polypeptide reads, in one-letter code: HTH-type transcriptional regulator ArgP (297 aa).

One can recognise an HTH lysR-type domain in the interval 4–60 (PDYRTLQALDAVIRERGFERAAQKLCITQSAVSQRIKQLENMFGQPLLVRTVPPRPT). The segment at residues 21–40 (FERAAQKLCITQSAVSQRIK) is a DNA-binding region (H-T-H motif).

This sequence belongs to the LysR transcriptional regulatory family. As to quaternary structure, homodimer.

Functionally, controls the transcription of genes involved in arginine and lysine metabolism. The polypeptide is HTH-type transcriptional regulator ArgP (Salmonella typhi).